A 206-amino-acid chain; its full sequence is LexA repressor (206 aa).

Residues 28-48 constitute a DNA-binding region (H-T-H motif); it reads RAEIAKRLGFKSANAAEEHLK. Active-site for autocatalytic cleavage activity residues include S123 and K160.

The protein belongs to the peptidase S24 family. As to quaternary structure, homodimer.

It carries out the reaction Hydrolysis of Ala-|-Gly bond in repressor LexA.. Represses a number of genes involved in the response to DNA damage (SOS response), including recA and lexA. In the presence of single-stranded DNA, RecA interacts with LexA causing an autocatalytic cleavage which disrupts the DNA-binding part of LexA, leading to derepression of the SOS regulon and eventually DNA repair. The chain is LexA repressor from Shewanella sediminis (strain HAW-EB3).